The chain runs to 154 residues: Putative NADPH-dependent 7-cyano-7-deazaguanine reductase (154 aa).

Asp-52 (proton donor) is an active-site residue. Substrate contacts are provided by residues 67-69 (VES) and 86-87 (HE).

This sequence belongs to the GTP cyclohydrolase I family. QueF type 1 subfamily.

It localises to the cytoplasm. The catalysed reaction is 7-aminomethyl-7-carbaguanine + 2 NADP(+) = 7-cyano-7-deazaguanine + 2 NADPH + 3 H(+). The protein operates within tRNA modification; tRNA-queuosine biosynthesis. Functionally, catalyzes the NADPH-dependent reduction of 7-cyano-7-deazaguanine (preQ0) to 7-aminomethyl-7-deazaguanine (preQ1). In Streptococcus pneumoniae serotype 4 (strain ATCC BAA-334 / TIGR4), this protein is Putative NADPH-dependent 7-cyano-7-deazaguanine reductase.